The sequence spans 43 residues: Protein PsbN (43 aa).

Residues 5–27 (TLVAISISGLLVSFTGYALYTAF) traverse the membrane as a helical segment.

The protein belongs to the PsbN family.

Its subcellular location is the plastid. The protein localises to the chloroplast thylakoid membrane. In terms of biological role, may play a role in photosystem I and II biogenesis. The polypeptide is Protein PsbN (Houttuynia cordata (Chameleon plant)).